The following is a 172-amino-acid chain: Small ribosomal subunit protein uS5 (172 aa).

An S5 DRBM domain is found at 13–76 (LVEKMISVNR…EQARHNMMKI (64 aa)).

It belongs to the universal ribosomal protein uS5 family. As to quaternary structure, part of the 30S ribosomal subunit. Contacts proteins S4 and S8.

In terms of biological role, with S4 and S12 plays an important role in translational accuracy. Functionally, located at the back of the 30S subunit body where it stabilizes the conformation of the head with respect to the body. The chain is Small ribosomal subunit protein uS5 from Chromobacterium violaceum (strain ATCC 12472 / DSM 30191 / JCM 1249 / CCUG 213 / NBRC 12614 / NCIMB 9131 / NCTC 9757 / MK).